We begin with the raw amino-acid sequence, 1366 residues long: DNA-directed RNA polymerase subunit beta'' (1366 aa).

Zn(2+)-binding residues include cysteine 220, cysteine 290, cysteine 297, and cysteine 300.

It belongs to the RNA polymerase beta' chain family. RpoC2 subfamily. In plastids the minimal PEP RNA polymerase catalytic core is composed of four subunits: alpha, beta, beta', and beta''. When a (nuclear-encoded) sigma factor is associated with the core the holoenzyme is formed, which can initiate transcription. It depends on Zn(2+) as a cofactor.

It is found in the plastid. The protein resides in the chloroplast. The enzyme catalyses RNA(n) + a ribonucleoside 5'-triphosphate = RNA(n+1) + diphosphate. In terms of biological role, DNA-dependent RNA polymerase catalyzes the transcription of DNA into RNA using the four ribonucleoside triphosphates as substrates. The sequence is that of DNA-directed RNA polymerase subunit beta'' from Lemna minor (Common duckweed).